The chain runs to 154 residues: Myoglobin (154 aa).

A Globin domain is found at 2–148 (GLSDEEWKKV…FRNDMASRYK (147 aa)). Residue His-65 participates in nitrite binding. Residue His-65 participates in O2 binding. Heme b is bound at residue His-94.

This sequence belongs to the globin family. As to quaternary structure, monomeric.

It localises to the cytoplasm. Its subcellular location is the sarcoplasm. The catalysed reaction is Fe(III)-heme b-[protein] + nitric oxide + H2O = Fe(II)-heme b-[protein] + nitrite + 2 H(+). It carries out the reaction H2O2 + AH2 = A + 2 H2O. Functionally, monomeric heme protein which primary function is to store oxygen and facilitate its diffusion within muscle tissues. Reversibly binds oxygen through a pentacoordinated heme iron and enables its timely and efficient release as needed during periods of heightened demand. Depending on the oxidative conditions of tissues and cells, and in addition to its ability to bind oxygen, it also has a nitrite reductase activity whereby it regulates the production of bioactive nitric oxide. Under stress conditions, like hypoxia and anoxia, it also protects cells against reactive oxygen species thanks to its pseudoperoxidase activity. The polypeptide is Myoglobin (MB) (Varanus varius (Lace monitor lizard)).